The chain runs to 438 residues: Acyl-CoA dehydrogenase apdG (438 aa).

This sequence belongs to the acyl-CoA dehydrogenase family. FAD is required as a cofactor.

It participates in secondary metabolite biosynthesis. In terms of biological role, acyl-CoA dehydrogenase; part of the gene cluster that mediates the biosynthesis of aspyridones. The polyketide-amino acid backbone preaspyridone A is first assembled by the PKS-NRPS hybrid apdA. The assembly of preaspyridone A is initiated by loading of malonyl-CoA onto apdA, followed by decarboxylation to yield the acetyl starter unit. The growing polyketide chain then elongates into a tetraketide. The adpA PKS module catalyzes three Claisen condensations, as well as beta-keto processing and methylation. Alpha-methylation step during polyketide synthesis is a prerequisite and a key checkpoint for chain transfer between PKS and NRPS modules. The downstream NRPS module contains the condensation (C), adenylation (A), and thiolation (T) domains and catalyzes the incorporation of tyrosine via the formation of the L-tyrosinyl-thioester and the amide linkage between L-tyrosinyl-thioester and the tetraketide. The bimodular assembly line is terminated with a reductase (R) domain that facilitates formation and release of the tetramic acid product. Because apdA lacks a designated enoylreductase (ER) domain, the required activity is provided the enoyl reductase apdC. ApdC appears to operate with different stereoselectivity in different PKS cycle. Combined with apdC, apdA is proposed to synthesize preaspyridone A via about 20 enzymatic steps. A number of oxidative steps performed successively by the cytochrome P450 monooxygenases apdE and apdB are required for the conversion of preaspyridone A to aspyridone A. The cytochrome P450 monooxygenase apdE is responsible for the oxidative dephenylation of preaspyridone A. Finally, the predicted FAD-dependent monooxygenase apdD and the acyl-CoA dehydrogenase apdG may be involved in the transformation of aspyridone A into aspyridone B. The polypeptide is Acyl-CoA dehydrogenase apdG (Emericella nidulans (strain FGSC A4 / ATCC 38163 / CBS 112.46 / NRRL 194 / M139) (Aspergillus nidulans)).